Consider the following 236-residue polypeptide: Chorionic somatomammotropin hormone 1 (236 aa).

The N-terminal stretch at methionine 1–glycine 36 is a signal peptide. A glycan (N-linked (GlcNAc...) asparagine) is linked at asparagine 89. Disulfide bonds link cysteine 98–cysteine 214 and cysteine 231–cysteine 236.

Belongs to the somatotropin/prolactin family.

It is found in the secreted. The sequence is that of Chorionic somatomammotropin hormone 1 (CSH1) from Bos taurus (Bovine).